Consider the following 31-residue polypeptide: Toxin BmKK16 (31 aa).

Gln-1 is modified (pyrrolidone carboxylic acid). 3 disulfide bridges follow: Cys-4-Cys-20, Cys-10-Cys-25, and Cys-14-Cys-27. Position 31 is a proline amide (Pro-31).

Belongs to the short scorpion toxin superfamily. Potassium channel inhibitor family. Alpha-KTx 17 subfamily. The N-terminus is blocked. As to expression, expressed by the venom gland.

Its subcellular location is the secreted. Its function is as follows. Blocker of potassium channels (Kv). The polypeptide is Toxin BmKK16 (Olivierus martensii (Manchurian scorpion)).